We begin with the raw amino-acid sequence, 168 residues long: MAVKIKLTRLGKIRNPQYRIVVADARTRRDGRSIEVIGRYHPKEEPSLIELNSERAQYWLGVGAQPTEPVLQLLKITGDWQKFKGLPGAEGTLKVKEPKPSKLDLFNAALAEAEGGPSNEATQPKKKKAPAKKAASDIEATADPAGNADKSEPAAEGEDATVAGATEG.

The segment at 110-168 is disordered; sequence LAEAEGGPSNEATQPKKKKAPAKKAASDIEATADPAGNADKSEPAAEGEDATVAGATEG.

This sequence belongs to the bacterial ribosomal protein bS16 family.

This is Small ribosomal subunit protein bS16 from Mycobacterium sp. (strain JLS).